A 147-amino-acid chain; its full sequence is Hemoglobin subunit gamma-1 (147 aa).

The residue at position 2 (glycine 2) is an N-acetylglycine. In terms of domain architecture, Globin spans histidine 3–histidine 147. Threonine 13 carries the post-translational modification Phosphothreonine. A phosphoserine mark is found at serine 45, serine 51, and serine 53. An N6-acetyllysine modification is found at lysine 60. Histidine 64 lines the heme b pocket. The residue at position 83 (lysine 83) is an N6-acetyllysine. Histidine 93 contacts heme b. An S-nitrosocysteine modification is found at cysteine 94. Serine 140 carries the phosphoserine modification.

Belongs to the globin family. As to quaternary structure, heterotetramer of two alpha chains and two gamma chains in fetal hemoglobin (Hb F). The ratio of gamma-G to gamma-A chains in is approximately 2:1 in infant chimpanzee, and 1:2 in the adult. In terms of tissue distribution, red blood cells.

Its function is as follows. Gamma chains make up the fetal hemoglobin F, in combination with alpha chains. In Pan troglodytes (Chimpanzee), this protein is Hemoglobin subunit gamma-1 (HBG1).